We begin with the raw amino-acid sequence, 198 residues long: Recombination protein RecR (198 aa).

A C4-type zinc finger spans residues 57–72; it reads CSVCHNITDTDPCRIC. The Toprim domain maps to 80–175; it reads SVICVVQDAK…KVTRIAHGLP (96 aa).

The protein belongs to the RecR family.

In terms of biological role, may play a role in DNA repair. It seems to be involved in an RecBC-independent recombinational process of DNA repair. It may act with RecF and RecO. This is Recombination protein RecR from Halalkalibacterium halodurans (strain ATCC BAA-125 / DSM 18197 / FERM 7344 / JCM 9153 / C-125) (Bacillus halodurans).